Reading from the N-terminus, the 457-residue chain is tRNA-2-methylthio-N(6)-dimethylallyladenosine synthase (457 aa).

The MTTase N-terminal domain occupies 8-123 (KKVFIKTFGC…LPEMLARRDA (116 aa)). Residues Cys17, Cys54, Cys86, Cys160, Cys164, and Cys167 each contribute to the [4Fe-4S] cluster site. A Radical SAM core domain is found at 146–379 (RVDGATAFVS…QEAIEANGRR (234 aa)). In terms of domain architecture, TRAM spans 382 to 449 (QSRVGTVQRI…PHSLRGEVLL (68 aa)).

Belongs to the methylthiotransferase family. MiaB subfamily. Monomer. [4Fe-4S] cluster is required as a cofactor.

The protein resides in the cytoplasm. The catalysed reaction is N(6)-dimethylallyladenosine(37) in tRNA + (sulfur carrier)-SH + AH2 + 2 S-adenosyl-L-methionine = 2-methylsulfanyl-N(6)-dimethylallyladenosine(37) in tRNA + (sulfur carrier)-H + 5'-deoxyadenosine + L-methionine + A + S-adenosyl-L-homocysteine + 2 H(+). Functionally, catalyzes the methylthiolation of N6-(dimethylallyl)adenosine (i(6)A), leading to the formation of 2-methylthio-N6-(dimethylallyl)adenosine (ms(2)i(6)A) at position 37 in tRNAs that read codons beginning with uridine. This chain is tRNA-2-methylthio-N(6)-dimethylallyladenosine synthase, found in Methylibium petroleiphilum (strain ATCC BAA-1232 / LMG 22953 / PM1).